A 598-amino-acid chain; its full sequence is Elongation factor 4 (598 aa).

In terms of domain architecture, tr-type G spans 2 to 184; the sequence is KNIRNFSIIA…RLVKEIPAPE (183 aa). Residues 14-19 and 131-134 each bind GTP; these read DHGKST and NKID.

It belongs to the TRAFAC class translation factor GTPase superfamily. Classic translation factor GTPase family. LepA subfamily.

Its subcellular location is the cell inner membrane. The catalysed reaction is GTP + H2O = GDP + phosphate + H(+). Functionally, required for accurate and efficient protein synthesis under certain stress conditions. May act as a fidelity factor of the translation reaction, by catalyzing a one-codon backward translocation of tRNAs on improperly translocated ribosomes. Back-translocation proceeds from a post-translocation (POST) complex to a pre-translocation (PRE) complex, thus giving elongation factor G a second chance to translocate the tRNAs correctly. Binds to ribosomes in a GTP-dependent manner. This Proteus mirabilis (strain HI4320) protein is Elongation factor 4.